The following is a 276-amino-acid chain: Replication protein A 32 kDa subunit-A (276 aa).

A compositionally biased stretch (gly residues) spans 19–31 (GGGGYMQSPGGFG). Residues 19-47 (GGGGYMQSPGGFGSPAPTQGEKKSRSRSQ) are disordered. Residues 77-151 (VTIVGIVRHA…KSVVAFKIAP (75 aa)) constitute a DNA-binding region (OB).

It belongs to the replication factor A protein 2 family. Component of the replication protein A complex (RPA/RP-A), a heterotrimeric complex composed of RPA1, RPA2 and RPA3. Post-translationally, differentially phosphorylated throughout the cell cycle, becoming phosphorylated at the G1-S transition and dephosphorylated in late mitosis. Phosphorylation increases upon replication fork stalling.

The protein resides in the nucleus. Its subcellular location is the PML body. As part of the heterotrimeric replication protein A complex (RPA/RP-A), binds and stabilizes single-stranded DNA intermediates, that form during DNA replication or upon DNA stress. It prevents their reannealing and in parallel, recruits and activates different proteins and complexes involved in DNA metabolism. Thereby, it plays an essential role both in DNA replication and the cellular response to DNA damage. The chain is Replication protein A 32 kDa subunit-A (rpa2-a) from Xenopus laevis (African clawed frog).